Here is a 326-residue protein sequence, read N- to C-terminus: Putative nickel insertion protein (326 aa).

The protein belongs to the LarC family.

This chain is Putative nickel insertion protein, found in Enterococcus faecalis (strain ATCC 700802 / V583).